A 1395-amino-acid chain; its full sequence is G-protein coupled receptor-associated sorting protein 1 (1395 aa).

3 disordered regions span residues 1-25, 45-83, and 269-288; these read MTGA…VVGG, QIMP…AKAI, and TNTW…FRSK. Over residues 269–281 the composition is skewed to basic and acidic residues; it reads TNTWSGPREDPNS. Phosphoserine is present on Ser-297. Residues 446–469 are disordered; it reads SMGTGASSKSRPRTDGERIGDSLF. Residues 457–469 show a composition bias toward basic and acidic residues; that stretch reads PRTDGERIGDSLF. Ser-631 and Ser-899 each carry phosphoserine. The OPRD1-binding stretch occupies residues 899–1395; it reads SETEEETIFG…QNDPEGDQEN (497 aa).

This sequence belongs to the GPRASP family. As to quaternary structure, interacts with cytoplasmic tails of a variety of G-protein coupled receptors such as D2 dopamine receptor/DRD2, delta opioid receptor/OPRD1, beta-2 adrenergic receptor/ADRB2 and D4 dopamine receptor/DRD4. Interacts with PER1. Interacts with BECN2; the interaction is direct. As to expression, expressed in the brain, with lower expression in medulla, spinal cord and substantia nigra.

It is found in the cytoplasm. In terms of biological role, modulates lysosomal sorting and functional down-regulation of a variety of G-protein coupled receptors. Targets receptors for degradation in lysosomes via its interaction with BECN2. This chain is G-protein coupled receptor-associated sorting protein 1 (GPRASP1), found in Homo sapiens (Human).